The primary structure comprises 330 residues: MPSPAPPTELLPWERAVVLLSCALSALGSGLLVATHALWPDLRSRARRLLLFLSLADLLSAASYFYGVLQDFAGTSWDCVLQGALSTFANTSSFFWTVAIALYLYLSIVRTTRGPSTDHLIWAFHLISWGVPLAITVAAVSLKKIGYDASDVSVGWCWINLEAEDRVLWMLLTGKLWEMLAYILLPLLYLLVRKHINRAHQALSEYRPICEGRQLQRGSSTSTADKKLVLIPLIFICLRVWSTVRFVLTLCGSPAVQTPVLVVLHGIGNTFQGGANCIMFVLCTRAVRTRLFSLCCCCPRPSTQSPPGAPTPPKIGESQESRRTPEVPST.

The Extracellular segment spans residues M1–R15. The chain crosses the membrane as a helical span at residues A16–H36. Residues A37–R48 are Cytoplasmic-facing. A helical membrane pass occupies residues L49–L69. At Q70–T87 the chain is on the extracellular side. The helical transmembrane segment at F88–I108 threads the bilayer. The Cytoplasmic segment spans residues V109–H119. A helical transmembrane segment spans residues L120–V140. The Extracellular portion of the chain corresponds to S141–R166. The chain crosses the membrane as a helical span at residues V167–L187. Residues L188 to K227 are Cytoplasmic-facing. The helical transmembrane segment at L228 to L248 threads the bilayer. The Extracellular segment spans residues T249–P259. Residues V260 to F280 traverse the membrane as a helical segment. Residues V281–T330 are Cytoplasmic-facing. Positions P301–T330 are disordered. Basic and acidic residues predominate over residues E317 to T330.

This sequence belongs to the G-protein coupled receptor 2 family. In terms of tissue distribution, expressed in the primary cilia of radial glial progenitors (RGPs) in the developing neocortex.

The protein resides in the cell projection. The protein localises to the cilium membrane. Its function is as follows. Orphan receptor that promotes neuronal differentiation of radial glial progenitors (RGPs). The activity of this receptor is mediated by a G(q)-protein that activates a phosphatidylinositol-calcium second messenger. The chain is G-protein coupled receptor 157 (Gpr157) from Mus musculus (Mouse).